The sequence spans 527 residues: Coiled-coil domain-containing protein 148 (527 aa).

Coiled-coil stretches lie at residues 289-353 (LAKD…TEIK) and 401-438 (LEKR…VAVQ).

The sequence is that of Coiled-coil domain-containing protein 148 (Ccdc148) from Mus musculus (Mouse).